Consider the following 125-residue polypeptide: MARISGIDLPNNKQLKIALTSIYGIGRTRALEVCNKSSISPSKIAKDLDNDEVNRLRKVIESDYIVEGKLRSEVAMSIKRLMDIACYRGVRHRKGLPLRGQRTKTNARTRKGKRKTVANKKIASK.

The interval 95–125 (GLPLRGQRTKTNARTRKGKRKTVANKKIASK) is disordered.

The protein belongs to the universal ribosomal protein uS13 family. Part of the 30S ribosomal subunit. Forms a loose heterodimer with protein S19. Forms two bridges to the 50S subunit in the 70S ribosome.

Located at the top of the head of the 30S subunit, it contacts several helices of the 16S rRNA. In the 70S ribosome it contacts the 23S rRNA (bridge B1a) and protein L5 of the 50S subunit (bridge B1b), connecting the 2 subunits; these bridges are implicated in subunit movement. Contacts the tRNAs in the A and P-sites. The polypeptide is Small ribosomal subunit protein uS13 (Borreliella burgdorferi (strain ATCC 35210 / DSM 4680 / CIP 102532 / B31) (Borrelia burgdorferi)).